The sequence spans 157 residues: S-ribosylhomocysteine lyase (157 aa).

The Fe cation site is built by His-54, His-58, and Cys-126.

Belongs to the LuxS family. Homodimer. The cofactor is Fe cation.

The catalysed reaction is S-(5-deoxy-D-ribos-5-yl)-L-homocysteine = (S)-4,5-dihydroxypentane-2,3-dione + L-homocysteine. Functionally, involved in the synthesis of autoinducer 2 (AI-2) which is secreted by bacteria and is used to communicate both the cell density and the metabolic potential of the environment. The regulation of gene expression in response to changes in cell density is called quorum sensing. Catalyzes the transformation of S-ribosylhomocysteine (RHC) to homocysteine (HC) and 4,5-dihydroxy-2,3-pentadione (DPD). This chain is S-ribosylhomocysteine lyase, found in Bacillus cereus (strain G9842).